A 1380-amino-acid polypeptide reads, in one-letter code: Protein TORNADO 1 (1380 aa).

LRR repeat units lie at residues 26–46 (FFNL…CQLI), 47–70 (TESS…FIEL), 105–132 (TSKI…ILKR), 161–184 (NDSL…ELSR), 266–289 (NTTV…EFRW), 299–322 (EVKL…LFKN), 323–346 (KSLQ…LLCP), 348–371 (SRFS…GSNT), 446–472 (INPL…IYQK), and 476–502 (NGRK…SVRA). Residues 493–702 (PLTEPKSVRA…HHIRMTSKAI (210 aa)) form the Roc domain. Residues 506 to 513 (GQNYAGKT) and 567 to 571 (NLAGQ) each bind GTP. The helical transmembrane segment at 574 to 594 (FFALHDLMFPSPCFFLIVLSL) threads the bilayer. LRR repeat units follow at residues 640–665 (LTHS…RLRD), 688–712 (VSKL…VYQL), 799–826 (LTQL…ELEK), 1023–1046 (QSQF…TMYD), 1131–1154 (EAVL…IQGL), and 1229–1254 (QLGC…NFMK). 641–644 (THSE) is a binding site for GTP. Positions 757-931 (NIQIVETRRH…LQVHLHNRIM (175 aa)) constitute a COR domain. Transmembrane regions (helical) follow at residues 1255–1275 (LVTF…HMIP) and 1287–1307 (PAVM…AALG).

In terms of tissue distribution, expressed in seedlings, roots, leaves, stems and flowers. Present in ovules, prominently in nucellus and integuments.

The protein resides in the membrane. Functionally, involved in the basipetal transport of auxin (IAA) that modulates growth and organs organization. Required for initial divisions in the epidermal/lateral root cap leading to the formation of epidermal cells and a clone of lateral root cap cells, as well as for the maintenance of the radial pattern of cell specification in the root, thus regulating the distinction between the lateral root cap and epidermis. This is Protein TORNADO 1 (TRN1) from Arabidopsis thaliana (Mouse-ear cress).